Here is a 716-residue protein sequence, read N- to C-terminus: Translation initiation factor IF-2 (716 aa).

Positions 52–135 (QQESNNNTKQ…PAAEPKEMPS (84 aa)) are disordered. Residues 56–125 (NNNTKQNTQN…KNNKGNKNNK (70 aa)) are compositionally biased toward low complexity. The tr-type G domain occupies 218–387 (ERPAVVTIMG…GLVAEVQELK (170 aa)). Residues 227–234 (GHVDHGKT) form a G1 region. 227–234 (GHVDHGKT) contacts GTP. Positions 252–256 (GITQH) are G2. The tract at residues 273–276 (DTPG) is G3. GTP is bound by residues 273 to 277 (DTPGH) and 327 to 330 (NKID). A G4 region spans residues 327–330 (NKID). The interval 363 to 365 (SAL) is G5.

Belongs to the TRAFAC class translation factor GTPase superfamily. Classic translation factor GTPase family. IF-2 subfamily.

It is found in the cytoplasm. Functionally, one of the essential components for the initiation of protein synthesis. Protects formylmethionyl-tRNA from spontaneous hydrolysis and promotes its binding to the 30S ribosomal subunits. Also involved in the hydrolysis of GTP during the formation of the 70S ribosomal complex. This is Translation initiation factor IF-2 from Staphylococcus haemolyticus (strain JCSC1435).